Reading from the N-terminus, the 188-residue chain is Adenine phosphoribosyltransferase (188 aa).

Belongs to the purine/pyrimidine phosphoribosyltransferase family. As to quaternary structure, homodimer.

The protein localises to the cytoplasm. The catalysed reaction is AMP + diphosphate = 5-phospho-alpha-D-ribose 1-diphosphate + adenine. The protein operates within purine metabolism; AMP biosynthesis via salvage pathway; AMP from adenine: step 1/1. Functionally, catalyzes a salvage reaction resulting in the formation of AMP, that is energically less costly than de novo synthesis. This is Adenine phosphoribosyltransferase from Paraburkholderia xenovorans (strain LB400).